Reading from the N-terminus, the 481-residue chain is Phloretin 4'-O-glucosyltransferase (481 aa).

H16 (proton acceptor) is an active-site residue. H16 lines the an anthocyanidin pocket. UDP-alpha-D-glucose contacts are provided by Q354, H369, W372, N373, S374, E377, D393, and Q394.

Belongs to the UDP-glycosyltransferase family. Highly expressed in young leaves, at intermediate level in mature leaves and at low levels in flowers and fruits.

The enzyme catalyses phloretin + UDP-alpha-D-glucose = trilobatin + UDP + H(+). It catalyses the reaction (2S)-naringenin + UDP-alpha-D-glucose = (2S)-naringenin 7-O-beta-D-glucoside + UDP + H(+). Its function is as follows. Glycosyltransferase that possesses phloretin 4'-O-glycosyltransferase activity. Converts phloretin to trilobatin (phloretin 4'-O-glucoside), a potential antioxidant. Can convert with low efficiency phlorizin and trilobatin to their corresponding di-O-glucosides. Can convert with low efficiency naringenin to naringenin-7-O-glucoside. Can convert with low efficiency quercetin to quercetin-7-O-glucoside. The chain is Phloretin 4'-O-glucosyltransferase from Malus domestica (Apple).